We begin with the raw amino-acid sequence, 473 residues long: Cysteine--tRNA ligase (473 aa).

Cys28 lines the Zn(2+) pocket. A 'HIGH' region motif is present at residues 30-40; sequence MTVYDFCHIGH. Zn(2+)-binding residues include Cys212, His237, and Glu241. The 'KMSKS' region motif lies at 277–281; it reads KMSKS. Lys280 is an ATP binding site.

Belongs to the class-I aminoacyl-tRNA synthetase family. As to quaternary structure, monomer. Requires Zn(2+) as cofactor.

It is found in the cytoplasm. It catalyses the reaction tRNA(Cys) + L-cysteine + ATP = L-cysteinyl-tRNA(Cys) + AMP + diphosphate. The sequence is that of Cysteine--tRNA ligase from Polynucleobacter necessarius subsp. necessarius (strain STIR1).